Reading from the N-terminus, the 365-residue chain is Histidinol-phosphate aminotransferase (365 aa).

Lys223 carries the N6-(pyridoxal phosphate)lysine modification.

The protein belongs to the class-II pyridoxal-phosphate-dependent aminotransferase family. Histidinol-phosphate aminotransferase subfamily. In terms of assembly, homodimer. Requires pyridoxal 5'-phosphate as cofactor.

The enzyme catalyses L-histidinol phosphate + 2-oxoglutarate = 3-(imidazol-4-yl)-2-oxopropyl phosphate + L-glutamate. Its pathway is amino-acid biosynthesis; L-histidine biosynthesis; L-histidine from 5-phospho-alpha-D-ribose 1-diphosphate: step 7/9. This is Histidinol-phosphate aminotransferase from Brucella melitensis biotype 1 (strain ATCC 23456 / CCUG 17765 / NCTC 10094 / 16M).